A 431-amino-acid polypeptide reads, in one-letter code: MQALNITPEQFSRLLRDHNLTREQFIALYRLRPLVYTPELPGRAKLALVLTGVLIFALALFGNALVFYVVTRSKAMRTVTNIFICSLALSDLLITFFCIPVTMLQNISDNWLGGAFICKMVPFVQSTAVVTEILTMTCIAVERHQGLVHPFKMKWQYTNRRAFTMLGVVWLVAVIVGSPMWHVQQLEIKYDFLYEKEHICCLEEWTSPVHQKIYTTFILVILFLLPLMVMLILYSKIGYELWIKKRVGDGSVLRTIHGKEMSKIARKKKRAVIMMVTVVALFAVCWAPFHVVHMMIEYSNFEKEYDDVTIKMIFAIVQIIGFSNSICNPIVYAFMNENFKKNVLSAVCYCIVNKTFSPAQRHGNSGITMMRKKAKFSLRENPVEETKGEAFSDGNIEVKLCEQTEEKKKLKRHLALFRSELAENSPLDSGH.

Over 1-46 (MQALNITPEQFSRLLRDHNLTREQFIALYRLRPLVYTPELPGRAKL) the chain is Extracellular. N19 carries an N-linked (GlcNAc...) asparagine glycan. A helical transmembrane segment spans residues 47–67 (ALVLTGVLIFALALFGNALVF). The Cytoplasmic portion of the chain corresponds to 68–81 (YVVTRSKAMRTVTN). Residues 82–102 (IFICSLALSDLLITFFCIPVT) form a helical membrane-spanning segment. Residues 103–120 (MLQNISDNWLGGAFICKM) are Extracellular-facing. Residues 121–141 (VPFVQSTAVVTEILTMTCIAV) traverse the membrane as a helical segment. The Cytoplasmic portion of the chain corresponds to 142-162 (ERHQGLVHPFKMKWQYTNRRA). Residues 163 to 183 (FTMLGVVWLVAVIVGSPMWHV) form a helical membrane-spanning segment. The Extracellular portion of the chain corresponds to 184–212 (QQLEIKYDFLYEKEHICCLEEWTSPVHQK). The chain crosses the membrane as a helical span at residues 213 to 233 (IYTTFILVILFLLPLMVMLIL). The Cytoplasmic portion of the chain corresponds to 234 to 271 (YSKIGYELWIKKRVGDGSVLRTIHGKEMSKIARKKKRA). The chain crosses the membrane as a helical span at residues 272–292 (VIMMVTVVALFAVCWAPFHVV). Over 293–311 (HMMIEYSNFEKEYDDVTIK) the chain is Extracellular. The chain crosses the membrane as a helical span at residues 312-332 (MIFAIVQIIGFSNSICNPIVY). Residues 333 to 431 (AFMNENFKKN…AENSPLDSGH (99 aa)) lie on the Cytoplasmic side of the membrane.

It belongs to the G-protein coupled receptor 1 family. Expressed widely in the brain with high levels in the hypothalamus, trigeminal ganglia and vestibular neurons, and moderate levels in the amygdala, cortex, pituitary, hippocampus, thalamus, caudate nucleus and medulla oblongata. In peripheral tissues, expressed at high levels in the retina and at moderate levels in the heart, kidney, testis and thyroid.

Its subcellular location is the cell membrane. Functionally, receptor for the orexigenic neuropeptide QRFP. The activity of this receptor is mediated by G proteins that modulate adenylate cyclase activity and intracellular calcium levels. The sequence is that of Pyroglutamylated RF-amide peptide receptor (QRFPR) from Homo sapiens (Human).